The chain runs to 706 residues: Dihydroxyacetone synthase (706 aa).

Residues histidine 76 and 126–128 (GPL) contribute to the thiamine diphosphate site. Positions 167, 197, and 199 each coordinate Mg(2+). Asparagine 197 contributes to the thiamine diphosphate binding site. Thiamine diphosphate contacts are provided by histidine 273, glutamate 431, and phenylalanine 459. Glutamate 431 (proton donor) is an active-site residue. Residues 704-706 (NHL) carry the Microbody targeting signal motif.

It belongs to the transketolase family. Mg(2+) serves as cofactor. Ca(2+) is required as a cofactor. It depends on Mn(2+) as a cofactor. The cofactor is Co(2+). Requires thiamine diphosphate as cofactor.

It is found in the peroxisome. It carries out the reaction D-xylulose 5-phosphate + formaldehyde = dihydroxyacetone + D-glyceraldehyde 3-phosphate. In terms of biological role, involved in assimilation of formaldehyde. The polypeptide is Dihydroxyacetone synthase (DAS1) (Candida boidinii (Yeast)).